The primary structure comprises 100 residues: Small ribosomal subunit protein uS14c (100 aa).

Belongs to the universal ribosomal protein uS14 family. As to quaternary structure, part of the 30S ribosomal subunit.

It localises to the plastid. It is found in the chloroplast. Its function is as follows. Binds 16S rRNA, required for the assembly of 30S particles. The protein is Small ribosomal subunit protein uS14c of Coffea arabica (Arabian coffee).